The sequence spans 1167 residues: PH and Rap-GAP domain-containing protein DDB_G0271806 (1167 aa).

PH domains lie at 35-140 (NCVK…SSSL) and 165-257 (HVYL…SRIP). The tract at residues 95 to 160 (GIDNNNCTNS…TNANTNNGLS (66 aa)) is disordered. Residues 98–155 (NNNCTNSNSNNNNNNSDLIHLSAPSLSSSTSSTISPISSSSSLTTTTTTTTTTTNANT) show a composition bias toward low complexity. 3 disordered regions span residues 335–361 (SGGGSNNSSPSSLQSQQAKESGNGGSL), 376–400 (WRFSSSPSQGRVSIGGGGDRSSTQV), and 645–734 (YSRS…LEPE). Positions 340 to 351 (NNSSPSSLQSQQ) are enriched in low complexity. Residues 648 to 676 (SEPNLQSCLSSSPSTRETMVPSSPSSHQL) are compositionally biased toward polar residues. Over residues 687 to 732 (EQQLSSSSSSSSQQLQLQLQQQEQEQLLQEQPEAEQSQPEPQPQLE) the composition is skewed to low complexity. The region spanning 950–1162 (LLSFEERQTT…RTRESLLNYY (213 aa)) is the Rap-GAP domain.

The polypeptide is PH and Rap-GAP domain-containing protein DDB_G0271806 (Dictyostelium discoideum (Social amoeba)).